A 349-amino-acid chain; its full sequence is Dehydrogenase FPY6 (349 aa).

Belongs to the Gfo/Idh/MocA family.

Its pathway is secondary metabolite biosynthesis. Functionally, dehydrogenase; part of the gene cluster that mediates the biosynthesis of the gamma-pyrones fusapyrone (FPY) and deoxyfusapyrone (dFPY). FPY is an undecaketide and thus likely synthesized by the polyketide synthase FPY1 from acetyl-CoA functioning as starter unit and the addition of 10 malonyl-CoA extender units by successive Claisen-condensations. Next to this, FPY shares some rare features: C-glycosylated 4-deoxyglucose at C-3, a gem-dimethyl group at C-13, and an alpha-beta to beta-gamma double bond shift at C-20. During FPY biosynthesis mono-C-methyl groups are transferred to the tetra-, penta-, hexa- and heptaketide, while two C-methyl groups are transferred to the nonaketide, suggesting that the CMet domain is programmed to selectively catalyze two successive C-alpha-methylation reactions of the nonaketide, while other alpha-carbons are non- or mono-methylated only. While the origin of the 4'-deoxyglucose moiety remains opaque, its transfer to C-3 is most likely mediated by the C-glycosyltransferase FPY2. Next to this, the hydroxyl group present at C-33 and discriminating between FPY and dFPY, is likely to be installed by the cytochrome P450 monooxygenase FPY7. No putative function can be predicted for the remaining genes FPY3-FPY6. The sequence is that of Dehydrogenase FPY6 from Fusarium mangiferae (Mango malformation disease fungus).